Consider the following 105-residue polypeptide: Serine protease inhibitor Kazal-type 6 (105 aa).

The N-terminal stretch at 1 to 23 (MKVAGVFLLLSLALLCFFSGEFS) is a signal peptide. Pyrrolidone carboxylic acid is present on Gln-24. One can recognise a Kazal-like domain in the interval 49–105 (RLFQINCGEFRDPKVFCTRESDPLCGSDGQTYGNKCAFCKALEKSSGKINLKHRGKC). Intrachain disulfides connect Cys-55-Cys-87, Cys-65-Cys-84, and Cys-73-Cys-105.

The protein localises to the secreted. In terms of biological role, serine protease inhibitor selective for kallikreins. Efficiently inhibits KLK4, KLK5, KLK6, KLK7, KLK12, KLK13 and KLK14. Doesn't inhibit KLK8. The chain is Serine protease inhibitor Kazal-type 6 (Spink6) from Rattus norvegicus (Rat).